A 1687-amino-acid polypeptide reads, in one-letter code: Muscle calcium channel subunit alpha-1 (1687 aa).

A disordered region spans residues 1-33; sequence MDDAVCPTETDNVQNKQKATTPKRTQRRGGKQQ. Topologically, residues 1–61 are cytoplasmic; sequence MDDAVCPTET…IFCIKIVDSK (61 aa). Positions 9–23 are enriched in polar residues; the sequence is ETDNVQNKQKATTPK. One copy of the I repeat lies at 48 to 330; sequence NPLRIFCIKI…LILGVLSGEF (283 aa). A helical transmembrane segment spans residues 62–80; the sequence is LFEYFILLTIFANCVALAV. Residues 81-99 lie on the Extracellular side of the membrane; the sequence is YTPYPSGDSNITNQMLEKI. N-linked (GlcNAc...) asparagine glycosylation is present at N90. A helical membrane pass occupies residues 100 to 117; the sequence is EYIFLVIFTSECVMKIIA. Topologically, residues 118–130 are cytoplasmic; sequence YGFVLHTGSYLRN. The helical transmembrane segment at 131–145 threads the bilayer; the sequence is GWNFLDFFIVVIGMI. The Extracellular segment spans residues 146-157; that stretch reads STALSNLVKEGF. Residues 158–176 form a helical membrane-spanning segment; it reads DVKALRAFRVLRPLRLVSG. Topologically, residues 177 to 196 are cytoplasmic; sequence VPSLQVVLNSILKAMIPLLH. A helical transmembrane segment spans residues 197–216; sequence IALLVLFVIIIYAIIGLELF. Residues 217–302 are Extracellular-facing; that stretch reads SGKLHKTCRH…SIQDAMGSSW (86 aa). E285 serves as a coordination point for Ca(2+). The chain crosses the membrane as a helical span at residues 303 to 327; the sequence is EWIYFVSMVILGAFFVMNLILGVLS. Over 328-434 the chain is Cytoplasmic; that stretch reads GEFSKERTKA…RACRKAVKSQ (107 aa). Residues 420-667 form an II repeat; the sequence is NRRIRRACRK…VFLAIAVDNL (248 aa). Residues 435-454 form a helical membrane-spanning segment; sequence AFYWLIILLVFLNTGVLATE. The Extracellular portion of the chain corresponds to 455–467; that stretch reads HYRQPIWLDQFQE. Residues 468-487 form a helical membrane-spanning segment; that stretch reads YTNIFFIALFTCEMILKMYS. Residues 488 to 496 lie on the Cytoplasmic side of the membrane; it reads LGFQGYFVS. A helical membrane pass occupies residues 497–515; the sequence is LFNRFDCFVVIGSISEMVL. Residues 516-525 lie on the Extracellular side of the membrane; the sequence is TSSELMAPLG. A helical membrane pass occupies residues 526 to 544; that stretch reads VSVLRCVRLLRVFKVTKYW. Residues 545-563 lie on the Cytoplasmic side of the membrane; sequence HSLSNLVASLLNSIQSIAS. Residues 564 to 583 form a helical membrane-spanning segment; the sequence is LLLLLFLFIVIFGLLGMQVF. The Extracellular segment spans residues 584 to 639; the sequence is GGRFTFKPEEEKPRSNFDSFYQSLLTVFQILTGEDWNVVMYDGIRAYGGVFSFGIV. E617 contacts Ca(2+). Residues 640 to 664 form a helical membrane-spanning segment; the sequence is ACIYYIILFICGNYILLNVFLAIAV. At 665–785 the chain is on the cytoplasmic side; that stretch reads DNLADADSLS…TNRFRIFCHR (121 aa). One copy of the III repeat lies at 777–1059; the sequence is NRFRIFCHRL…IFVGFVIVTF (283 aa). A helical membrane pass occupies residues 786 to 809; sequence LCNHSNFGNFILCCIMFSSAMLAA. Residues 810–826 are Extracellular-facing; the sequence is ENPLKADASRNIVLNKF. A helical transmembrane segment spans residues 827-846; sequence DYFFTAVFTIELVLKLISYG. At 847–854 the chain is on the cytoplasmic side; it reads FVLHDGAF. The chain crosses the membrane as a helical span at residues 855–877; it reads CRSAFNLLDLLVVCVSLISIFFN. At 878 to 885 the chain is on the extracellular side; that stretch reads SNAISVVK. A helical transmembrane segment spans residues 886 to 900; the sequence is ILRVLRVLRPLRAIN. At 901-921 the chain is on the cytoplasmic side; it reads RAKGLKHVVQCVIVAVKTIGN. Residues 922-941 traverse the membrane as a helical segment; the sequence is IVLVTCLLQFMFAVIGVQLF. Residues 942–1030 are Extracellular-facing; that stretch reads KGKFFSCSDG…NGGPIYNFRP (89 aa). Residues 979–1068 form a dihydropyridine binding region; it reads REWKNNKFHF…FQNEGEQEYK (90 aa). E1005 contacts Ca(2+). Residues 1031 to 1055 traverse the membrane as a helical segment; sequence IVAAYYIIYIIIIAFFMVNIFVGFV. Residues 1056-1110 are Cytoplasmic-facing; the sequence is IVTFQNEGEQEYKNCELDKNQRNCIEFALKAKPVRRYIPKHSIQYKVWWFVTSSS. One copy of the IV repeat lies at 1096–1370; the sequence is HSIQYKVWWF…LFVAVIMDNF (275 aa). Residues 1111–1129 traverse the membrane as a helical segment; that stretch reads FEYSIFVLIMINTVTLAMK. Residues 1130–1143 lie on the Extracellular side of the membrane; sequence FYKQPEYYSEILDA. Residues 1144–1163 traverse the membrane as a helical segment; that stretch reads LNMIFTAVFSLEFIFKLAAF. The Cytoplasmic segment spans residues 1164-1172; sequence RFKNYFGDA. A helical membrane pass occupies residues 1173–1191; it reads WNTFDFIIVLGSFIDIVYS. Over 1192-1219 the chain is Extracellular; it reads EIKTKEQALATCDGQSCNKAKGGSTLIS. The helical transmembrane segment at 1220-1238 threads the bilayer; that stretch reads INFFRLFRVMRLVKLLSKG. The Cytoplasmic portion of the chain corresponds to 1239–1257; that stretch reads EGIRTLLWTFIKSFQALPY. A helical transmembrane segment spans residues 1258–1277; that stretch reads VALLIVMLFFIYAVIGMQVF. Topologically, residues 1278–1343 are extracellular; it reads GKIMLEEGTS…AVNNCGSSIA (66 aa). Positions 1327–1389 are dihydropyridine binding; sequence KCDPESDAVN…LGPHHLDEFI (63 aa). The phenylalkylamine binding stretch occupies residues 1337 to 1378; that stretch reads NCGSSIAFPYFISFYVLCSFLIINLFVAVIMDNFDYLTRDWS. The helical transmembrane segment at 1344–1362 threads the bilayer; it reads FPYFISFYVLCSFLIINLF. Residues 1363–1687 lie on the Cytoplasmic side of the membrane; sequence VAVIMDNFDY…PKSKDKDEEF (325 aa).

The protein belongs to the calcium channel alpha-1 subunit (TC 1.A.1.11) family. Predominantly expressed in the larval body wall musculature. In adults, highest expression in thorax followed by head and at a lower extent by abdomen.

Its subcellular location is the membrane. Voltage-sensitive calcium channels (VSCC) mediate the entry of calcium ions into excitable cells and are also involved in a variety of calcium-dependent processes, including muscle contraction, hormone or neurotransmitter release, gene expression, cell motility, cell division and cell death. MDL-alpha1 encodes a dihydropyridine- and diltiazem-sensitive current in larval body wall muscle. This is Muscle calcium channel subunit alpha-1 from Musca domestica (House fly).